Reading from the N-terminus, the 421-residue chain is Mitochondrial distribution and morphology protein 10 (421 aa).

Belongs to the MDM10 family. Component of the ER-mitochondria encounter structure (ERMES) or MDM complex, composed of MMM1, MDM10, MDM12 and MDM34. Associates with the mitochondrial outer membrane sorting assembly machinery SAM(core) complex.

Its subcellular location is the mitochondrion outer membrane. Its function is as follows. Component of the ERMES/MDM complex, which serves as a molecular tether to connect the endoplasmic reticulum and mitochondria. Components of this complex are involved in the control of mitochondrial shape and protein biogenesis and may function in phospholipid exchange. MDM10 is involved in the late assembly steps of the general translocase of the mitochondrial outer membrane (TOM complex). Functions in the TOM40-specific route of the assembly of outer membrane beta-barrel proteins, including the association of TOM40 with the receptor TOM22 and small TOM proteins. Can associate with the SAM(core) complex as well as the MDM12-MMM1 complex, both involved in late steps of the major beta-barrel assembly pathway, that is responsible for biogenesis of all outer membrane beta-barrel proteins. May act as a switch that shuttles between both complexes and channels precursor proteins into the TOM40-specific pathway. Plays a role in mitochondrial morphology and in the inheritance of mitochondria. This is Mitochondrial distribution and morphology protein 10 from Vanderwaltozyma polyspora (strain ATCC 22028 / DSM 70294 / BCRC 21397 / CBS 2163 / NBRC 10782 / NRRL Y-8283 / UCD 57-17) (Kluyveromyces polysporus).